A 442-amino-acid chain; its full sequence is Probable folate-biopterin transporter 7 (442 aa).

The next 12 helical transmembrane spans lie at 23 to 43 (LGFG…ANFF), 64 to 82 (LPMV…VYFF), 87 to 107 (IPYI…IAFL), 114 to 134 (ILAL…VEVA), 158 to 178 (FVWM…GIAI), 184 to 204 (QSTF…TINI), 241 to 261 (IAWI…MFFY), 270 to 290 (ASLL…WGFA), 302 to 322 (KLLT…LLFV), 335 to 355 (VYVL…ILPF), 379 to 399 (IALA…FVGV), and 410 to 430 (GLAI…WIYD).

The protein belongs to the major facilitator superfamily. Folate-biopterin transporter (TC 2.A.71) family.

It localises to the membrane. Functionally, could mediate folate transport. In Arabidopsis thaliana (Mouse-ear cress), this protein is Probable folate-biopterin transporter 7.